The sequence spans 986 residues: Translation initiation factor IF-2 (986 aa).

Residues 95–394 (TFVRRDETSA…GRGKHQDQNT (300 aa)) are disordered. Residues 122-182 (ELQRREEEAR…EEEAAKKRAA (61 aa)) are compositionally biased toward basic and acidic residues. The segment covering 183–222 (AEAAAREQAQAAKPAQAAQPAAAKAEPVAAKAAEPAVAKQ) has biased composition (low complexity). A compositionally biased stretch (basic and acidic residues) spans 228 to 277 (ERAAAERAAQREAAKKAEDAARQAAEKARAEQEQIAKRRAAAEAEARAIR). Residues 320 to 342 (APSRPAAKKPAAAAPAATTTPSA) show a composition bias toward low complexity. Positions 371–384 (TSGGVDRGWRGGPK) are enriched in gly residues. The tr-type G domain occupies 486–655 (PRPPVVTVMG…LLQAEVLELK (170 aa)). Residues 495 to 502 (GHVDHGKT) are G1. 495–502 (GHVDHGKT) contacts GTP. The tract at residues 520–524 (GITQH) is G2. The interval 541–544 (DTPG) is G3. Residues 541–545 (DTPGH) and 595–598 (NKID) each bind GTP. Residues 595–598 (NKID) form a G4 region. Residues 631–633 (SAK) are G5.

It belongs to the TRAFAC class translation factor GTPase superfamily. Classic translation factor GTPase family. IF-2 subfamily.

It is found in the cytoplasm. Its function is as follows. One of the essential components for the initiation of protein synthesis. Protects formylmethionyl-tRNA from spontaneous hydrolysis and promotes its binding to the 30S ribosomal subunits. Also involved in the hydrolysis of GTP during the formation of the 70S ribosomal complex. In Paraburkholderia phytofirmans (strain DSM 17436 / LMG 22146 / PsJN) (Burkholderia phytofirmans), this protein is Translation initiation factor IF-2.